Here is a 137-residue protein sequence, read N- to C-terminus: Small ribosomal subunit protein uS12 (137 aa).

The tract at residues M1 to K57 is disordered. Residue D102 is modified to 3-methylthioaspartic acid.

The protein belongs to the universal ribosomal protein uS12 family. Part of the 30S ribosomal subunit. Contacts proteins S8 and S17. May interact with IF1 in the 30S initiation complex.

With S4 and S5 plays an important role in translational accuracy. Functionally, interacts with and stabilizes bases of the 16S rRNA that are involved in tRNA selection in the A site and with the mRNA backbone. Located at the interface of the 30S and 50S subunits, it traverses the body of the 30S subunit contacting proteins on the other side and probably holding the rRNA structure together. The combined cluster of proteins S8, S12 and S17 appears to hold together the shoulder and platform of the 30S subunit. This Streptococcus suis (strain 98HAH33) protein is Small ribosomal subunit protein uS12.